We begin with the raw amino-acid sequence, 310 residues long: GMP synthase [glutamine-hydrolyzing] subunit B (310 aa).

The region spanning 1-187 (MSTSSYIDQI…LGLRTDLQPF (187 aa)) is the GMPS ATP-PPase domain. Residue 27–33 (SGGQDSS) participates in ATP binding.

As to quaternary structure, heterodimer composed of a glutamine amidotransferase subunit (A) and a GMP-binding subunit (B).

It carries out the reaction XMP + L-glutamine + ATP + H2O = GMP + L-glutamate + AMP + diphosphate + 2 H(+). The protein operates within purine metabolism; GMP biosynthesis; GMP from XMP (L-Gln route): step 1/1. Catalyzes the synthesis of GMP from XMP. In Thermoplasma acidophilum (strain ATCC 25905 / DSM 1728 / JCM 9062 / NBRC 15155 / AMRC-C165), this protein is GMP synthase [glutamine-hydrolyzing] subunit B (guaAB).